Consider the following 1019-residue polypeptide: Phosphatidylinositol 3,4,5-trisphosphate 5-phosphatase 1 (1019 aa).

Residues 5–101 (WYHGNITRSK…GLVTHLQYPI (97 aa)) form the SH2 domain. Over residues 103–116 (KEEEGPEEPDEEQE) the composition is skewed to acidic residues. Disordered stretches follow at residues 103 to 133 (KEEEGPEEPDEEQEPAPPNVPPRNFAFTPPS) and 909 to 1019 (ETQN…PPTA). The SH3-binding 1 signature appears at 120 to 125 (PNVPPR). Composition is skewed to polar residues over residues 909 to 931 (ETQNSMDHTASVAAISSQAKQSP) and 958 to 980 (PITSPPRTTLSTQKFSHSNTNRT). Positions 966 to 971 (TLSTQK) match the SH3-binding 2 motif. The NPXY motif motif lies at 1004-1007 (NPLY). Tyrosine 1007 is subject to Phosphotyrosine. Residues 1010–1019 (VNNTLYPPTA) are compositionally biased toward polar residues.

The protein belongs to the inositol 1,4,5-trisphosphate 5-phosphatase family. Post-translationally, tyrosine phosphorylated by the members of the SRC family after exposure to a diverse array of extracellular stimuli.

Its subcellular location is the cytoplasm. It localises to the cell membrane. The protein resides in the membrane raft. The protein localises to the cytoskeleton. It carries out the reaction a 1,2-diacyl-sn-glycero-3-phospho-(1D-myo-inositol-3,4,5-trisphosphate) + H2O = a 1,2-diacyl-sn-glycero-3-phospho-(1D-myo-inositol-3,4-bisphosphate) + phosphate. It catalyses the reaction 1D-myo-inositol 1,3,4,5-tetrakisphosphate + H2O = 1D-myo-inositol 1,3,4-trisphosphate + phosphate. The enzyme catalyses a 1,2-diacyl-sn-glycero-3-phospho-(1D-myo-inositol-4,5-bisphosphate) + H2O = a 1,2-diacyl-sn-glycero-3-phospho-(1D-myo-inositol 4-phosphate) + phosphate. In terms of biological role, phosphatidylinositol (PtdIns) phosphatase that specifically hydrolyzes the 5-phosphate of phosphatidylinositol-3,4,5-trisphosphate (PtdIns(3,4,5)P3) to produce PtdIns(3,4)P2, thereby negatively regulating the PI3K (phosphoinositide 3-kinase) pathways. Able also to hydrolyzes the 5-phosphate of phosphatidylinositol-4,5-bisphosphate (PtdIns(4,5)P3) and inositol 1,3,4,5-tetrakisphosphate. Acts as a negative regulator of B-cell antigen receptor signaling. Mediates signaling from the FC-gamma-RIIB receptor (FCGR2B), playing a central role in terminating signal transduction from activating immune/hematopoietic cell receptor systems. Acts as a negative regulator of myeloid cell proliferation/survival and chemotaxis, mast cell degranulation, immune cells homeostasis, integrin alpha-IIb/beta-3 signaling in platelets and JNK signaling in B-cells. The polypeptide is Phosphatidylinositol 3,4,5-trisphosphate 5-phosphatase 1 (inpp5d) (Xenopus laevis (African clawed frog)).